We begin with the raw amino-acid sequence, 70 residues long: Cytochrome c oxidase subunit 8B, mitochondrial (70 aa).

Residues 1–24 (MSRLAPPLRLLQAPLKCWAVPKAH) constitute a mitochondrion transit peptide. Residues 25–35 (VSAKPARTPTS) lie on the Mitochondrial matrix side of the membrane. The helical transmembrane segment at 36–59 (PMEQAVGLSVMFVSFLVPSGWVLS) threads the bilayer. Over 60-70 (HLESYKKSSTT) the chain is Mitochondrial intermembrane.

Belongs to the cytochrome c oxidase VIII family. Component of the cytochrome c oxidase (complex IV, CIV), a multisubunit enzyme composed of 14 subunits. The complex is composed of a catalytic core of 3 subunits MT-CO1, MT-CO2 and MT-CO3, encoded in the mitochondrial DNA, and 11 supernumerary subunits COX4I, COX5A, COX5B, COX6A, COX6B, COX6C, COX7A, COX7B, COX7C, COX8 and NDUFA4, which are encoded in the nuclear genome. The complex exists as a monomer or a dimer and forms supercomplexes (SCs) in the inner mitochondrial membrane with NADH-ubiquinone oxidoreductase (complex I, CI) and ubiquinol-cytochrome c oxidoreductase (cytochrome b-c1 complex, complex III, CIII), resulting in different assemblies (supercomplex SCI(1)III(2)IV(1) and megacomplex MCI(2)III(2)IV(2)).

The protein localises to the mitochondrion inner membrane. It participates in energy metabolism; oxidative phosphorylation. Functionally, component of the cytochrome c oxidase, the last enzyme in the mitochondrial electron transport chain which drives oxidative phosphorylation. The respiratory chain contains 3 multisubunit complexes succinate dehydrogenase (complex II, CII), ubiquinol-cytochrome c oxidoreductase (cytochrome b-c1 complex, complex III, CIII) and cytochrome c oxidase (complex IV, CIV), that cooperate to transfer electrons derived from NADH and succinate to molecular oxygen, creating an electrochemical gradient over the inner membrane that drives transmembrane transport and the ATP synthase. Cytochrome c oxidase is the component of the respiratory chain that catalyzes the reduction of oxygen to water. Electrons originating from reduced cytochrome c in the intermembrane space (IMS) are transferred via the dinuclear copper A center (CU(A)) of subunit 2 and heme A of subunit 1 to the active site in subunit 1, a binuclear center (BNC) formed by heme A3 and copper B (CU(B)). The BNC reduces molecular oxygen to 2 water molecules using 4 electrons from cytochrome c in the IMS and 4 protons from the mitochondrial matrix. The sequence is that of Cytochrome c oxidase subunit 8B, mitochondrial (COX8B) from Carlito syrichta (Philippine tarsier).